The chain runs to 187 residues: Elongation factor P (187 aa).

This sequence belongs to the elongation factor P family.

It localises to the cytoplasm. The protein operates within protein biosynthesis; polypeptide chain elongation. Involved in peptide bond synthesis. Stimulates efficient translation and peptide-bond synthesis on native or reconstituted 70S ribosomes in vitro. Probably functions indirectly by altering the affinity of the ribosome for aminoacyl-tRNA, thus increasing their reactivity as acceptors for peptidyl transferase. This Flavobacterium psychrophilum (strain ATCC 49511 / DSM 21280 / CIP 103535 / JIP02/86) protein is Elongation factor P.